A 316-amino-acid polypeptide reads, in one-letter code: Cytochrome c oxidase assembly protein COX18, mitochondrial (316 aa).

Residues 164 to 184 (WKNALLPMVQIPLWVTVSMGI) traverse the membrane as a helical segment. At 185-213 (RTLTETQLIESFYPSWFSALGFSSFDLSS) the chain is on the mitochondrial matrix side. The helical transmembrane segment at 214–234 (PLVAMPLLAPILVGTLAVLNV) threads the bilayer. The Mitochondrial intermembrane portion of the chain corresponds to 235 to 274 (ELNGRLMFSSSLSSQGIKTISRNSTRVQEAMTSILNVSRL). The chain crosses the membrane as a helical span at residues 275 to 295 (GCVVMLAMSSQAPFLLSLYWI). At 296-316 (SSQLFSLVQNIILNWIYPYQR) the chain is on the mitochondrial matrix side.

Belongs to the OXA1/ALB3/YidC family. In terms of assembly, interacts with PNT1 and MSS2.

Its subcellular location is the mitochondrion inner membrane. Functionally, required for the insertion of integral membrane proteins into the mitochondrial inner membrane. Essential for the activity and assembly of cytochrome c oxidase. Plays a central role in the translocation and export of the C-terminal part of the COX2 protein into the mitochondrial intermembrane space. This chain is Cytochrome c oxidase assembly protein COX18, mitochondrial (COX18), found in Saccharomyces cerevisiae (strain ATCC 204508 / S288c) (Baker's yeast).